We begin with the raw amino-acid sequence, 366 residues long: Peptide chain release factor 2 (366 aa).

Q251 carries the post-translational modification N5-methylglutamine.

The protein belongs to the prokaryotic/mitochondrial release factor family. In terms of processing, methylated by PrmC. Methylation increases the termination efficiency of RF2.

The protein resides in the cytoplasm. Functionally, peptide chain release factor 2 directs the termination of translation in response to the peptide chain termination codons UGA and UAA. This Bacillus subtilis (strain 168) protein is Peptide chain release factor 2 (prfB).